The primary structure comprises 147 residues: MKKILLLNGPNLNMLGKREPHIYGSQTLADIENHLQQLAKARGYCLEYFQANGEEPIINRIHQSFQNTDFIIINPGASTHTSVALRDALLSVAIPFVEVHLSNVHAREPFRHHSYLSDVAKGVICGLGAKGYDYALDYAIQFLKSGK.

Catalysis depends on Tyr-23, which acts as the Proton acceptor. The substrate site is built by Asn-74, His-80, and Asp-87. Residue His-100 is the Proton donor of the active site. Substrate contacts are provided by residues 101–102 (LS) and Arg-111.

It belongs to the type-II 3-dehydroquinase family. Homododecamer.

The catalysed reaction is 3-dehydroquinate = 3-dehydroshikimate + H2O. It functions in the pathway metabolic intermediate biosynthesis; chorismate biosynthesis; chorismate from D-erythrose 4-phosphate and phosphoenolpyruvate: step 3/7. Functionally, catalyzes a trans-dehydration via an enolate intermediate. In Glaesserella parasuis serovar 5 (strain SH0165) (Haemophilus parasuis), this protein is 3-dehydroquinate dehydratase.